A 106-amino-acid polypeptide reads, in one-letter code: Nucleoid-associated protein DIP0260 (106 aa).

It belongs to the YbaB/EbfC family. As to quaternary structure, homodimer.

It localises to the cytoplasm. The protein resides in the nucleoid. Its function is as follows. Binds to DNA and alters its conformation. May be involved in regulation of gene expression, nucleoid organization and DNA protection. The chain is Nucleoid-associated protein DIP0260 from Corynebacterium diphtheriae (strain ATCC 700971 / NCTC 13129 / Biotype gravis).